Here is a 290-residue protein sequence, read N- to C-terminus: HTH-type transcriptional regulator BudR (290 aa).

In terms of domain architecture, HTH lysR-type spans 1–58; that stretch reads MELRYLRYFVAVAEARNFTRAAHDLGISQPPLSQQIQRLEREIGTPLLRRLTRGVELT. Positions 18-37 form a DNA-binding region, H-T-H motif; sequence FTRAAHDLGISQPPLSQQIQ.

The protein belongs to the LysR transcriptional regulatory family.

Regulator of the budABC operon for 2,3-butanediol synthesis. This Raoultella terrigena (Klebsiella terrigena) protein is HTH-type transcriptional regulator BudR (budR).